The primary structure comprises 209 residues: Orotate phosphoribosyltransferase (209 aa).

Residues Arg-96, Lys-100, His-102, and 122–130 (EDLISTGGS) each bind 5-phospho-alpha-D-ribose 1-diphosphate. Position 126 (Ser-126) interacts with orotate.

The protein belongs to the purine/pyrimidine phosphoribosyltransferase family. PyrE subfamily. As to quaternary structure, homodimer. Mg(2+) is required as a cofactor.

It carries out the reaction orotidine 5'-phosphate + diphosphate = orotate + 5-phospho-alpha-D-ribose 1-diphosphate. The protein operates within pyrimidine metabolism; UMP biosynthesis via de novo pathway; UMP from orotate: step 1/2. Its function is as follows. Catalyzes the transfer of a ribosyl phosphate group from 5-phosphoribose 1-diphosphate to orotate, leading to the formation of orotidine monophosphate (OMP). This is Orotate phosphoribosyltransferase from Listeria innocua serovar 6a (strain ATCC BAA-680 / CLIP 11262).